A 404-amino-acid chain; its full sequence is F-box protein At3g57590 (404 aa).

The F-box domain occupies 1 to 47 (MEPIPNDLILEIFSRLPAKSVIGFRTLSKHWASILRSPVFTELFLTR).

This chain is F-box protein At3g57590, found in Arabidopsis thaliana (Mouse-ear cress).